A 216-amino-acid polypeptide reads, in one-letter code: Protein-L-isoaspartate O-methyltransferase (216 aa).

S61 is a catalytic residue.

The protein belongs to the methyltransferase superfamily. L-isoaspartyl/D-aspartyl protein methyltransferase family.

The protein resides in the cytoplasm. It carries out the reaction [protein]-L-isoaspartate + S-adenosyl-L-methionine = [protein]-L-isoaspartate alpha-methyl ester + S-adenosyl-L-homocysteine. Its function is as follows. Catalyzes the methyl esterification of L-isoaspartyl residues in peptides and proteins that result from spontaneous decomposition of normal L-aspartyl and L-asparaginyl residues. It plays a role in the repair and/or degradation of damaged proteins. This chain is Protein-L-isoaspartate O-methyltransferase, found in Geobacter metallireducens (strain ATCC 53774 / DSM 7210 / GS-15).